The chain runs to 412 residues: Na(+)/H(+) antiporter NhaA 1 (412 aa).

10 consecutive transmembrane segments (helical) span residues 34–54, 75–95, 114–134, 142–162, 183–203, 234–254, 282–302, 309–329, 349–369, and 379–399; these read VGGMVLLAAAALALVLANSPA, LTIGEWAKDGLLAIFFFVAGL, LPVVAALGGMVVPAVLAFAIG, AAWAIPVATDIAFALGVLSLT, LGAIVVIAVLFTSGLSVLALL, WIAVHSSGIHATIAGVALGLL, LIVPVFALFAAGVPVDGEALV, VAIAVVVGLVVGKLVGIFGSS, LSALAMLGGVGFTVSLLIAEL, and AKAAVLIASALASLLAAVMLL.

It belongs to the NhaA Na(+)/H(+) (TC 2.A.33) antiporter family.

The protein localises to the cell membrane. It catalyses the reaction Na(+)(in) + 2 H(+)(out) = Na(+)(out) + 2 H(+)(in). In terms of biological role, na(+)/H(+) antiporter that extrudes sodium in exchange for external protons. The chain is Na(+)/H(+) antiporter NhaA 1 from Saccharopolyspora erythraea (strain ATCC 11635 / DSM 40517 / JCM 4748 / NBRC 13426 / NCIMB 8594 / NRRL 2338).